The chain runs to 434 residues: Trigger factor 2 (434 aa).

Positions 164–247 (GDTVTVDYDC…VKKVERIEIL (84 aa)) constitute a PPIase FKBP-type domain.

The protein belongs to the FKBP-type PPIase family. Tig subfamily.

Its subcellular location is the cytoplasm. It carries out the reaction [protein]-peptidylproline (omega=180) = [protein]-peptidylproline (omega=0). In terms of biological role, involved in protein export. Acts as a chaperone by maintaining the newly synthesized protein in an open conformation. Functions as a peptidyl-prolyl cis-trans isomerase. This chain is Trigger factor 2, found in Desulfitobacterium hafniense (strain Y51).